The chain runs to 315 residues: Tetraacyldisaccharide 4'-kinase (315 aa).

52–59 is a binding site for ATP; sequence TVGGTGKT.

It belongs to the LpxK family.

It carries out the reaction a lipid A disaccharide + ATP = a lipid IVA + ADP + H(+). The protein operates within glycolipid biosynthesis; lipid IV(A) biosynthesis; lipid IV(A) from (3R)-3-hydroxytetradecanoyl-[acyl-carrier-protein] and UDP-N-acetyl-alpha-D-glucosamine: step 6/6. Functionally, transfers the gamma-phosphate of ATP to the 4'-position of a tetraacyldisaccharide 1-phosphate intermediate (termed DS-1-P) to form tetraacyldisaccharide 1,4'-bis-phosphate (lipid IVA). The chain is Tetraacyldisaccharide 4'-kinase from Ruthia magnifica subsp. Calyptogena magnifica.